Here is a 266-residue protein sequence, read N- to C-terminus: MATKILALLALLALFVSATNAFIIPQCSLAPSAIIPQFLRPVTSMGFEHLAVQAYRLQQALAASVLQQPINQLQQQSLAHLTIQTIATQQQQQFLPALSQLDVVNPVAYLQQQVLASNPLALANVAAYQQQQQLQQFLPALSQLAMVNPAAYLQQQQLLSSSPLVVGNAPTYLQQQLLQQIVPALTQLAVANPAAYLQQLLPFNQLTVSNSAAYLQQRQQLLNPLAVPNPLVTAFLQQQQLLPYSQFSLMNPALSWQQPIVGGAIF.

Positions 1-21 are cleaved as a signal peptide; the sequence is MATKILALLALLALFVSATNA.

It belongs to the zein family.

In terms of biological role, zeins are major seed storage proteins. The protein is 22 kDa alpha-zein 8 of Zea mays (Maize).